Consider the following 106-residue polypeptide: COX assembly mitochondrial protein homolog (106 aa).

Ala-2 carries the N-acetylalanine modification. The region spanning 28 to 71 is the CHCH domain; it reads KERCSEQVQDFTKCCKNSGVLMVVKCRKENSALKECLTAYYNDP. Short sequence motifs (cx9C motif) lie at residues 31-41 and 53-63; these read CSEQVQDFTKC and CRKENSALKEC. Intrachain disulfides connect Cys-31-Cys-63 and Cys-41-Cys-53.

The protein belongs to the CMC family. In terms of assembly, component of the MITRAC (mitochondrial translation regulation assembly intermediate of cytochrome c oxidase complex) complex, the core components of this complex being COA3/MITRAC12 and COX14.

Its subcellular location is the mitochondrion. Its function is as follows. Component of the MITRAC (mitochondrial translation regulation assembly intermediate of cytochrome c oxidase complex) complex, that regulates cytochrome c oxidase assembly. This is COX assembly mitochondrial protein homolog (CMC1) from Homo sapiens (Human).